The primary structure comprises 904 residues: MDAGFFRGTSAEQDNRFSNKQKKLLKQLKFAECLEKKVDMSKVNLEVIKPWITKRVTEILGFEDDVVIEFIFNQLEVKNPDSKMMQINLTGFLNGKNAREFMGELWPLLLSAQENIAGIPSAFLELKKEEIKQRQIEQEKLASMKKQDEDKDKRDKEEKESSREKRERSRSPRRRKSRSPSPRRRSSPVRRERKRSHSRSPRHRTKSRSPSPAPEKKEKTPELPEPSVKVKEPSVQEATSTSDILKVPKPEPIPEPKEPSPEKNSKKEKEKEKTRPRSRSRSKSRSRTRSRSPSHTRPRRRHRSRSRSYSPRRRPSPRRRPSPRRRTPPRRMPPPPRHRRSRSPVRRRRRSSASLSGSSSSSSSSRSRSPPKKPPKRTSSPPRKTRRLSPSASPPRRRHRPSPPATPPPKTRHSPTPQQSNRTRKSRVSVSPGRTSGKVTKHKGTEKRESPSPAPKPRKVELSESEEDKGGKMAAADSVQQRRQYRRQNQQSSSDSGSSSSSEDERPKRSHVKNGEVGRRRRHSPSRSASPSPRKRQKETSPRGRRRRSPSPPPTRRRRSPSPAPPPRRRRTPTPPPRRRTPSPPPRRRSPSPRRYSPPIQRRYSPSPPPKRRTASPPPPPKRRASPSPPPKRRVSHSPPPKQRSSPVTKRRSPSLSSKHRKGSSPSRSTREARSPQPNKRHSPSPRPRAPQTSSSPPPVRRGASSSPQRRQSPSPSTRPIRRVSRTPEPKKIKKAASPSPQSVRRVSSSRSVSGSPEPAAKKPPAPPSPVQSQSPSTNWSPAVPVKKAKSPTPSPSPPRNSDQEGGGKKKKKKKDKKHKKDKKHKKHKKHKKEKAVAAAAAAAVTPAAIAAATTTLAQEEPVAAPEPKKETESEAEDNLDDLEKHLREKALRSMRKAQVSPQS.

An N-acetylmethionine modification is found at Met1. A necessary for DNA and RNA-binding region spans residues 1–151 (MDAGFFRGTS…ASMKKQDEDK (151 aa)). The interval 1–156 (MDAGFFRGTS…QDEDKDKRDK (156 aa)) is necessary for mRNA 3'-end cleavage and cytoplasmic accumulation. Arg7 carries the citrulline modification. Residues 27–126 (QLKFAECLEK…AGIPSAFLEL (100 aa)) form the PWI domain. Residue Lys127 forms a Glycyl lysine isopeptide (Lys-Gly) (interchain with G-Cter in SUMO2) linkage. The span at 139 to 170 (EKLASMKKQDEDKDKRDKEEKESSREKRERSR) shows a compositional bias: basic and acidic residues. The disordered stretch occupies residues 139–904 (EKLASMKKQD…MRKAQVSPQS (766 aa)). Lys140 is modified (N6-acetyllysine). Residues 171 to 207 (SPRRRKSRSPSPRRRSSPVRRERKRSHSRSPRHRTKS) are compositionally biased toward basic residues. Residues 214–234 (PEKKEKTPELPEPSVKVKEPS) show a composition bias toward basic and acidic residues. Residue Thr220 is modified to Phosphothreonine. Residue Ser227 is modified to Phosphoserine. Lys231 is covalently cross-linked (Glycyl lysine isopeptide (Lys-Gly) (interchain with G-Cter in SUMO1); alternate). Lys231 is covalently cross-linked (Glycyl lysine isopeptide (Lys-Gly) (interchain with G-Cter in SUMO2); alternate). Phosphoserine occurs at positions 234 and 240. Thr241 bears the Phosphothreonine mark. A compositionally biased stretch (basic and acidic residues) spans 246-275 (KVPKPEPIPEPKEPSPEKNSKKEKEKEKTR). Residue Lys249 forms a Glycyl lysine isopeptide (Lys-Gly) (interchain with G-Cter in SUMO2) linkage. Ser260 carries the phosphoserine modification. 2 stretches are compositionally biased toward basic residues: residues 276–329 (PRSR…RTPP) and 336–351 (PRHR…RRRS). A necessary for speckles and matrix localization region spans residues 300 to 688 (RRHRSRSRSY…NKRHSPSPRP (389 aa)). The segment covering 352–368 (SASLSGSSSSSSSSRSR) has biased composition (low complexity). Phosphoserine occurs at positions 389, 391, 393, and 402. Thr406 is modified (phosphothreonine). Ser414 carries the post-translational modification Phosphoserine. A Phosphothreonine modification is found at Thr416. Phosphoserine is present on residues Ser420, Ser429, Ser431, and Ser436. Residues 428–438 (VSVSPGRTSGK) show a composition bias toward polar residues. Lys447 participates in a covalent cross-link: Glycyl lysine isopeptide (Lys-Gly) (interchain with G-Cter in SUMO2). Residues Ser450 and Ser452 each carry the phosphoserine modification. Lys459 is covalently cross-linked (Glycyl lysine isopeptide (Lys-Gly) (interchain with G-Cter in SUMO2)). Ser463 and Ser465 each carry phosphoserine. Lys472 participates in a covalent cross-link: Glycyl lysine isopeptide (Lys-Gly) (interchain with G-Cter in SUMO2). Ser478 carries the phosphoserine modification. Residues 478-501 (SVQQRRQYRRQNQQSSSDSGSSSS) are compositionally biased toward low complexity. Basic and acidic residues predominate over residues 503 to 518 (EDERPKRSHVKNGEVG). Phosphoserine occurs at positions 524, 526, 528, 530, 532, 549, and 551. The segment covering 533–560 (PRKRQKETSPRGRRRRSPSPPPTRRRRS) has biased composition (basic residues). Thr555 carries the post-translational modification Phosphothreonine. Phosphoserine is present on residues Ser560 and Ser562. Positions 567 to 592 (PRRRRTPTPPPRRRTPSPPPRRRSPS) are enriched in basic residues. Phosphothreonine is present on residues Thr572, Thr574, and Thr581. The residue at position 583 (Ser583) is a Phosphoserine. Residues 593 to 605 (PRRYSPPIQRRYS) show a composition bias toward low complexity. Residue Tyr596 is modified to Phosphotyrosine. Residues Ser597, Ser605, and Ser607 each carry the phosphoserine modification. A Phosphothreonine modification is found at Thr614. Phosphoserine occurs at positions 616, 626, 628, 636, and 638. The span at 621–636 (PKRRASPSPPPKRRVS) shows a compositional bias: basic residues. A compositionally biased stretch (basic residues) spans 649 to 663 (TKRRSPSLSSKHRKG). Residues Ser694, Ser695, Ser696, Ser705, Ser707, Ser713, and Ser715 each carry the phosphoserine modification. 2 stretches are compositionally biased toward low complexity: residues 701-719 (RRGA…PSTR) and 736-759 (AASP…SPEP). Position 718 is a phosphothreonine (Thr718). 10 positions are modified to phosphoserine: Ser738, Ser740, Ser748, Ser752, Ser754, Ser756, Ser769, Ser773, Ser775, and Ser777. Residues 771-786 (VQSQSPSTNWSPAVPV) show a composition bias toward low complexity. At Thr778 the chain carries Phosphothreonine. Ser781 and Ser791 each carry phosphoserine. Position 793 is a phosphothreonine (Thr793). 3 positions are modified to phosphoserine: Ser795, Ser797, and Ser802. Positions 809 to 834 (KKKKKKKDKKHKKDKKHKKHKKHKKE) are enriched in basic residues. Positions 837 to 866 (VAAAAAAAVTPAAIAAATTTLAQEEPVAAP) are enriched in low complexity. A Glycyl lysine isopeptide (Lys-Gly) (interchain with G-Cter in SUMO2) cross-link involves residue Lys869. At Thr872 the chain carries Phosphothreonine. Ser874 bears the Phosphoserine mark. Positions 882-892 (DLEKHLREKAL) are enriched in basic and acidic residues. The residue at position 901 (Ser901) is a Phosphoserine.

This sequence belongs to the splicing factor SR family. Identified in the spliceosome C complex. Found in a pre-mRNA splicing complex with SFRS4, SFRS5, SNRP70, SNRPA1, SRRM1 and SRRM2. Found in a pre-mRNA exonic splicing enhancer (ESE) complex with SNRP70, SNRPA1, SRRM1 and TRA2B/SFRS10. Component of the minor spliceosome, which splices U12-type introns. Found in a mRNA splicing-dependent exon junction complex (EJC) with DEK, PRPF8, NCBP1, RBM8A, RNPS1, SRRM1 and ALYREF/THOC4. Interacts with DDX39B, CPSF1, RBM8A, RNPS1, and ALYREF/THOC4. Seems to be a compound of RNA export complexes that are released from speckles in a ATP-dependent manner. Post-translationally, phosphorylated on multiple serine and threonine residues by DYRK3 during the G2-to-M transition, after the nuclear-envelope breakdown. Phosphorylation by DYRK3 promotes disassembly of nuclear speckles. In terms of processing, citrullinated by PADI4.

It localises to the nucleus matrix. The protein localises to the nucleus speckle. Part of pre- and post-splicing multiprotein mRNP complexes. As a component of the minor spliceosome, involved in the splicing of U12-type introns in pre-mRNAs. Involved in numerous pre-mRNA processing events. Promotes constitutive and exonic splicing enhancer (ESE)-dependent splicing activation by bridging together sequence-specific (SR family proteins, SFRS4, SFRS5 and TRA2B/SFRS10) and basal snRNP (SNRP70 and SNRPA1) factors of the spliceosome. Stimulates mRNA 3'-end cleavage independently of the formation of an exon junction complex. Binds both pre-mRNA and spliced mRNA 20-25 nt upstream of exon-exon junctions. Binds RNA and DNA with low sequence specificity and has similar preference for either double- or single-stranded nucleic acid substrates. The sequence is that of Serine/arginine repetitive matrix protein 1 (SRRM1) from Homo sapiens (Human).